Here is a 167-residue protein sequence, read N- to C-terminus: ATP synthase subunit b (167 aa).

Residues 10–30 (TFFFQLANTLIMFLILKHFLF) traverse the membrane as a helical segment.

Belongs to the ATPase B chain family. In terms of assembly, F-type ATPases have 2 components, F(1) - the catalytic core - and F(0) - the membrane proton channel. F(1) has five subunits: alpha(3), beta(3), gamma(1), delta(1), epsilon(1). F(0) has three main subunits: a(1), b(2) and c(10-14). The alpha and beta chains form an alternating ring which encloses part of the gamma chain. F(1) is attached to F(0) by a central stalk formed by the gamma and epsilon chains, while a peripheral stalk is formed by the delta and b chains.

It localises to the cell membrane. Functionally, f(1)F(0) ATP synthase produces ATP from ADP in the presence of a proton or sodium gradient. F-type ATPases consist of two structural domains, F(1) containing the extramembraneous catalytic core and F(0) containing the membrane proton channel, linked together by a central stalk and a peripheral stalk. During catalysis, ATP synthesis in the catalytic domain of F(1) is coupled via a rotary mechanism of the central stalk subunits to proton translocation. In terms of biological role, component of the F(0) channel, it forms part of the peripheral stalk, linking F(1) to F(0). The chain is ATP synthase subunit b from Alkaliphilus oremlandii (strain OhILAs) (Clostridium oremlandii (strain OhILAs)).